The primary structure comprises 259 residues: 7-cyano-7-deazaguanine synthase (259 aa).

32 to 42 (LSGGLDSVTCL) is a binding site for ATP. Zn(2+) is bound by residues cysteine 223, cysteine 233, cysteine 236, and cysteine 239.

This sequence belongs to the QueC family. Zn(2+) is required as a cofactor.

It catalyses the reaction 7-carboxy-7-deazaguanine + NH4(+) + ATP = 7-cyano-7-deazaguanine + ADP + phosphate + H2O + H(+). The protein operates within purine metabolism; 7-cyano-7-deazaguanine biosynthesis. In terms of biological role, catalyzes the ATP-dependent conversion of 7-carboxy-7-deazaguanine (CDG) to 7-cyano-7-deazaguanine (preQ(0)). This Psychrobacter cryohalolentis (strain ATCC BAA-1226 / DSM 17306 / VKM B-2378 / K5) protein is 7-cyano-7-deazaguanine synthase.